A 356-amino-acid chain; its full sequence is sn-glycerol-3-phosphate import ATP-binding protein UgpC (356 aa).

In terms of domain architecture, ABC transporter spans 4 to 235 (LKLQAVTKSW…PASLFVASFI (232 aa)). 37–44 (GPSGCGKS) provides a ligand contact to ATP.

It belongs to the ABC transporter superfamily. sn-glycerol-3-phosphate importer (TC 3.A.1.1.3) family. The complex is composed of two ATP-binding proteins (UgpC), two transmembrane proteins (UgpA and UgpE) and a solute-binding protein (UgpB).

The protein localises to the cell inner membrane. It catalyses the reaction sn-glycerol 3-phosphate(out) + ATP + H2O = sn-glycerol 3-phosphate(in) + ADP + phosphate + H(+). In terms of biological role, part of the ABC transporter complex UgpBAEC involved in sn-glycerol-3-phosphate (G3P) import. Responsible for energy coupling to the transport system. This is sn-glycerol-3-phosphate import ATP-binding protein UgpC from Escherichia coli O6:H1 (strain CFT073 / ATCC 700928 / UPEC).